The primary structure comprises 129 residues: Small ribosomal subunit protein uS8 (129 aa).

It belongs to the universal ribosomal protein uS8 family. Part of the 30S ribosomal subunit. Contacts proteins S5 and S12.

In terms of biological role, one of the primary rRNA binding proteins, it binds directly to 16S rRNA central domain where it helps coordinate assembly of the platform of the 30S subunit. The chain is Small ribosomal subunit protein uS8 from Colwellia psychrerythraea (strain 34H / ATCC BAA-681) (Vibrio psychroerythus).